The primary structure comprises 98 residues: Citrate lyase acyl carrier protein (98 aa).

An O-(phosphoribosyl dephospho-coenzyme A)serine modification is found at serine 14.

The protein belongs to the CitD family. Oligomer with a subunit composition of (alpha,beta,gamma)6.

It localises to the cytoplasm. Covalent carrier of the coenzyme of citrate lyase. This chain is Citrate lyase acyl carrier protein, found in Vibrio cholerae serotype O1 (strain ATCC 39541 / Classical Ogawa 395 / O395).